The chain runs to 242 residues: Cytochrome c oxidase subunit 2 (242 aa).

The Mitochondrial intermembrane segment spans residues 1–30 (MSFYGSRYFGDIVHGELGKDLFRYHGFVMM). Residues 31–47 (VAVAVLVFVMYMGCVIL) traverse the membrane as a helical segment. Residues 48 to 66 (FTKFSYRHFLNRQRLEFWW) are Mitochondrial matrix-facing. The chain crosses the membrane as a helical span at residues 67-83 (TIVPMLMLVGLWXPSMI). The Mitochondrial intermembrane segment spans residues 84-242 (NLYYMEEVKR…YFVMWLEALN (159 aa)). Cu cation-binding residues include histidine 176, cysteine 211, glutamate 213, cysteine 215, histidine 219, and methionine 222. Glutamate 213 contributes to the Mg(2+) binding site.

Belongs to the cytochrome c oxidase subunit 2 family. As to quaternary structure, component of the cytochrome c oxidase (complex IV, CIV), a multisubunit enzyme composed of a catalytic core of 3 subunits and several supernumerary subunits. The complex exists as a monomer or a dimer and forms supercomplexes (SCs) in the inner mitochondrial membrane with ubiquinol-cytochrome c oxidoreductase (cytochrome b-c1 complex, complex III, CIII). It depends on Cu cation as a cofactor.

The protein resides in the mitochondrion inner membrane. It carries out the reaction 4 Fe(II)-[cytochrome c] + O2 + 8 H(+)(in) = 4 Fe(III)-[cytochrome c] + 2 H2O + 4 H(+)(out). Functionally, component of the cytochrome c oxidase, the last enzyme in the mitochondrial electron transport chain which drives oxidative phosphorylation. The respiratory chain contains 3 multisubunit complexes succinate dehydrogenase (complex II, CII), ubiquinol-cytochrome c oxidoreductase (cytochrome b-c1 complex, complex III, CIII) and cytochrome c oxidase (complex IV, CIV), that cooperate to transfer electrons derived from NADH and succinate to molecular oxygen, creating an electrochemical gradient over the inner membrane that drives transmembrane transport and the ATP synthase. Cytochrome c oxidase is the component of the respiratory chain that catalyzes the reduction of oxygen to water. Electrons originating from reduced cytochrome c in the intermembrane space (IMS) are transferred via the dinuclear copper A center (CU(A)) of subunit 2 and heme A of subunit 1 to the active site in subunit 1, a binuclear center (BNC) formed by heme A3 and copper B (CU(B)). The BNC reduces molecular oxygen to 2 water molecules using 4 electrons from cytochrome c in the IMS and 4 protons from the mitochondrial matrix. This is Cytochrome c oxidase subunit 2 (COII) from Mytilus edulis (Blue mussel).